The primary structure comprises 470 residues: 6-phosphofructo-2-kinase/fructose-2,6-bisphosphatase (470 aa).

A 6-phosphofructo-2-kinase region spans residues 1-249; that stretch reads MADRLRELTQ…VYYLMNIHVT (249 aa). Serine 31 is modified (phosphoserine; by PKA). 47 to 55 is a binding site for ATP; that stretch reads GLPARGKTY. Residues arginine 80 and arginine 104 each contribute to the beta-D-fructose 6-phosphate site. Aspartate 130 is an active-site residue. Positions 132 and 138 each coordinate beta-D-fructose 6-phosphate. Residue cysteine 160 is part of the active site. 169 to 174 lines the ATP pocket; it reads NITQVK. Lysine 174, arginine 195, and tyrosine 199 together coordinate beta-D-fructose 6-phosphate. Residues 250–470 are fructose-2,6-bisphosphatase; the sequence is PRSIYLSRHG…EALDTVPEHF (221 aa). Arginine 257 provides a ligand contact to beta-D-fructose 2,6-bisphosphate. Histidine 258 acts as the Tele-phosphohistidine intermediate in catalysis. Residues asparagine 264 and glycine 270 each contribute to the beta-D-fructose 2,6-bisphosphate site. Residue glutamate 327 is the Proton donor/acceptor of the active site. Residues tyrosine 338, arginine 352, lysine 356, tyrosine 367, glutamine 393, and arginine 397 each coordinate beta-D-fructose 2,6-bisphosphate. An ATP-binding site is contributed by 349-352; that stretch reads FALR. Residues 393–397 and tyrosine 429 each bind ATP; that span reads QAVMR.

The protein in the C-terminal section; belongs to the phosphoglycerate mutase family. In terms of assembly, homodimer.

It catalyses the reaction beta-D-fructose 2,6-bisphosphate + H2O = beta-D-fructose 6-phosphate + phosphate. The catalysed reaction is beta-D-fructose 6-phosphate + ATP = beta-D-fructose 2,6-bisphosphate + ADP + H(+). Its activity is regulated as follows. Phosphorylation results in inhibition of the kinase activity. Synthesis and degradation of fructose 2,6-bisphosphate. The chain is 6-phosphofructo-2-kinase/fructose-2,6-bisphosphatase from Aquarana catesbeiana (American bullfrog).